A 161-amino-acid chain; its full sequence is Phosphopantetheine adenylyltransferase (161 aa).

Thr11 contacts substrate. Residues 11 to 12 (TF) and His19 each bind ATP. Substrate-binding residues include Lys43, Thr75, and Arg89. ATP-binding positions include 90–92 (GLR), Glu100, and 125–131 (YSFLSSS).

It belongs to the bacterial CoaD family. As to quaternary structure, homohexamer. Requires Mg(2+) as cofactor.

It is found in the cytoplasm. The catalysed reaction is (R)-4'-phosphopantetheine + ATP + H(+) = 3'-dephospho-CoA + diphosphate. It functions in the pathway cofactor biosynthesis; coenzyme A biosynthesis; CoA from (R)-pantothenate: step 4/5. Reversibly transfers an adenylyl group from ATP to 4'-phosphopantetheine, yielding dephospho-CoA (dPCoA) and pyrophosphate. This chain is Phosphopantetheine adenylyltransferase, found in Listeria innocua serovar 6a (strain ATCC BAA-680 / CLIP 11262).